A 180-amino-acid polypeptide reads, in one-letter code: Pro-glucagon (180 aa).

The signal sequence occupies residues 1–20 (MKSIYFVAGLFVMLVQGSWQ). The tract at residues 26–59 (TEEKSRSFSASQADPLSDPDQMNEDKRHSQGTFT) is disordered. Residue serine 54 is modified to Phosphoserine. Residues 84 to 89 (NRNNIA) constitute a propeptide that is removed on maturation. Residues serine 105 and serine 108 each carry the phosphoserine modification. Arginine 127 bears the Arginine amide mark. Residues 131-145 (DFPEEVAIVEELGRR) constitute a propeptide that is removed on maturation. Phosphoserine is present on residues serine 150 and serine 152.

This sequence belongs to the glucagon family. Post-translationally, proglucagon is post-translationally processed in a tissue-specific manner in pancreatic A cells and intestinal L cells. In pancreatic A cells, the major bioactive hormone is glucagon cleaved by PCSK2/PC2. In the intestinal L cells PCSK1/PC1 liberates GLP-1, GLP-2, glicentin and oxyntomodulin. GLP-1 is further N-terminally truncated by post-translational processing in the intestinal L cells resulting in GLP-1(7-37) GLP-1-(7-36)amide. The C-terminal amidation is neither important for the metabolism of GLP-1 nor for its effects on the endocrine pancreas. Secreted in the A cells of the islets of Langerhans. In terms of tissue distribution, secreted in the A cells of the islets of Langerhans. Secreted from enteroendocrine L cells throughout the gastrointestinal tract. Also secreted in selected neurons in the brain. As to expression, secreted from enteroendocrine cells throughout the gastrointestinal tract. Also secreted in selected neurons in the brain. Secreted from enteroendocrine cells throughout the gastrointestinal tract.

The protein resides in the secreted. Its function is as follows. Plays a key role in glucose metabolism and homeostasis. Regulates blood glucose by increasing gluconeogenesis and decreasing glycolysis. A counterregulatory hormone of insulin, raises plasma glucose levels in response to insulin-induced hypoglycemia. Plays an important role in initiating and maintaining hyperglycemic conditions in diabetes. Potent stimulator of glucose-dependent insulin release. Also stimulates insulin release in response to IL6. Plays important roles on gastric motility and the suppression of plasma glucagon levels. May be involved in the suppression of satiety and stimulation of glucose disposal in peripheral tissues, independent of the actions of insulin. Has growth-promoting activities on intestinal epithelium. May also regulate the hypothalamic pituitary axis (HPA) via effects on LH, TSH, CRH, oxytocin, and vasopressin secretion. Increases islet mass through stimulation of islet neogenesis and pancreatic beta cell proliferation. Inhibits beta cell apoptosis. Functionally, stimulates intestinal growth and up-regulates villus height in the small intestine, concomitant with increased crypt cell proliferation and decreased enterocyte apoptosis. The gastrointestinal tract, from the stomach to the colon is the principal target for GLP-2 action. Plays a key role in nutrient homeostasis, enhancing nutrient assimilation through enhanced gastrointestinal function, as well as increasing nutrient disposal. Stimulates intestinal glucose transport and decreases mucosal permeability. In terms of biological role, significantly reduces food intake. Inhibits gastric emptying in humans. Suppression of gastric emptying may lead to increased gastric distension, which may contribute to satiety by causing a sensation of fullness. Its function is as follows. May modulate gastric acid secretion and the gastro-pyloro-duodenal activity. May play an important role in intestinal mucosal growth in the early period of life. The protein is Pro-glucagon of Homo sapiens (Human).